The chain runs to 603 residues: UvrABC system protein C (603 aa).

Residues 14–92 (ELPGVYRMLD…IKSLAPRYNI (79 aa)) form the GIY-YIG domain. The region spanning 201-236 (QEVTRRLTKSMEEASAKLAFEQAAVFRDQIQSLHQV) is the UVR domain.

The protein belongs to the UvrC family. As to quaternary structure, interacts with UvrB in an incision complex.

It localises to the cytoplasm. Functionally, the UvrABC repair system catalyzes the recognition and processing of DNA lesions. UvrC both incises the 5' and 3' sides of the lesion. The N-terminal half is responsible for the 3' incision and the C-terminal half is responsible for the 5' incision. The protein is UvrABC system protein C of Dechloromonas aromatica (strain RCB).